The chain runs to 241 residues: Ribosomal RNA small subunit methyltransferase J (241 aa).

Residues 94-95 and aspartate 163 each bind S-adenosyl-L-methionine; that span reads RD.

Belongs to the methyltransferase superfamily. RsmJ family.

The protein resides in the cytoplasm. It catalyses the reaction guanosine(1516) in 16S rRNA + S-adenosyl-L-methionine = N(2)-methylguanosine(1516) in 16S rRNA + S-adenosyl-L-homocysteine + H(+). Specifically methylates the guanosine in position 1516 of 16S rRNA. This Francisella tularensis subsp. tularensis (strain FSC 198) protein is Ribosomal RNA small subunit methyltransferase J.